The primary structure comprises 333 residues: MKLSIRPFVLGIALCTLIGIVAFGLAKIPFFLSLHLSPLILSVLVGMALAPWYKKSGQIGIIGVLWCGKRLLRLGIVLFGFQVTLQSLLGVGVEGFLIALLVVAGIFTLGSYLGVKLLGLDRETSMLIACGSAVCGAAAILALESLSKTPAHKTAIAVGVVVLFGLLSMFLYPLVYEAGFIPLSPLQEGIYTGATLHEVANVIGASANLPKEAQEAAVIVKMIRVILLVPLLLLLSFTILKHREKGSNEVAIPWFALLFLGAILLGSLFFFPSWLRSLLQSGSLFSLTLAMGALGLVSDFSKLQGVGAKALALGAILWGVLLFGGLGLVKLLA.

9 helical membrane-spanning segments follow: residues 4-26, 31-53, 59-81, 88-110, 125-147, 154-176, 218-240, 253-275, and 310-332; these read SIRP…FGLA, FLSL…APWY, IGII…LFGF, LLGV…FTLG, SMLI…ESLS, TAIA…PLVY, VIVK…FTIL, PWFA…PSWL, and ALAL…VKLL.

This sequence belongs to the UPF0324 family.

It localises to the cell membrane. The polypeptide is UPF0324 membrane protein WS2204 (Wolinella succinogenes (strain ATCC 29543 / DSM 1740 / CCUG 13145 / JCM 31913 / LMG 7466 / NCTC 11488 / FDC 602W) (Vibrio succinogenes)).